Here is a 331-residue protein sequence, read N- to C-terminus: Flavonol synthase 1 (331 aa).

Positions 191-292 constitute a Fe2OG dioxygenase domain; that stretch reads DAIELLLKIN…RMSWPVFCSP (102 aa). Fe cation is bound by residues histidine 217, aspartate 219, and histidine 273. Arginine 283 lines the 2-oxoglutarate pocket.

It belongs to the iron/ascorbate-dependent oxidoreductase family. L-ascorbate serves as cofactor. Fe(2+) is required as a cofactor. In terms of tissue distribution, expressed in young cromes.

It carries out the reaction a (2R,3R)-dihydroflavonol + 2-oxoglutarate + O2 = a flavonol + succinate + CO2 + H2O. It catalyses the reaction (2R,3R)-dihydrokaempferol + 2-oxoglutarate + O2 = kaempferol + succinate + CO2 + H2O + H(+). The enzyme catalyses (2R,3R)-dihydroquercetin + 2-oxoglutarate + O2 = quercetin + succinate + CO2 + H2O + H(+). The catalysed reaction is (2R,3R)-dihydromyricetin + 2-oxoglutarate + O2 = myricetin + succinate + CO2 + H2O + H(+). Its pathway is flavonoid metabolism. In terms of biological role, catalyzes the formation of flavonols from dihydroflavonols. Can act on dihydrokaempferol to produce kaempferol, on dihydroquercetin to produce quercitin and on dihydromyricetin to produce myricetin. This Crocosmia x crocosmiiflora (Montbretia) protein is Flavonol synthase 1.